Here is a 322-residue protein sequence, read N- to C-terminus: Putative small RNA degrading nuclease 4 (322 aa).

Residues 75-213 (MLALDCEMVL…HDAAAAMKLA (139 aa)) form the Exonuclease domain.

Belongs to the REXO1/REXO3 family.

It localises to the nucleus. In terms of biological role, putative 3'-5' exonuclease degrading single-stranded small RNAs. This Arabidopsis thaliana (Mouse-ear cress) protein is Putative small RNA degrading nuclease 4 (SDN4).